A 36-amino-acid polypeptide reads, in one-letter code: Kappa-actitoxin-Avd6a (36 aa).

The region spanning 2–36 (CKDNFAAATCKHVKENKNCGSQKYATNCAKTCGKC) is the ShKT domain. 3 disulfide bridges follow: cysteine 2/cysteine 36, cysteine 11/cysteine 29, and cysteine 20/cysteine 33. Residues 24–25 (KY) are crucial for binding to potassium channels.

It belongs to the sea anemone type 1 potassium channel toxin family. Type 1b subfamily.

The protein localises to the secreted. It is found in the nematocyst. In terms of biological role, blocks voltage-gated potassium channels Kv1.2/KCNA2 (IC(50)=140 nM). The polypeptide is Kappa-actitoxin-Avd6a (Anemonia sulcata (Mediterranean snakelocks sea anemone)).